The chain runs to 179 residues: Large ribosomal subunit protein uL6 (179 aa).

This sequence belongs to the universal ribosomal protein uL6 family. Part of the 50S ribosomal subunit.

Its function is as follows. This protein binds to the 23S rRNA, and is important in its secondary structure. It is located near the subunit interface in the base of the L7/L12 stalk, and near the tRNA binding site of the peptidyltransferase center. The polypeptide is Large ribosomal subunit protein uL6 (Prochlorococcus marinus (strain SARG / CCMP1375 / SS120)).